The following is a 63-amino-acid chain: Cytochrome c oxidase subunit 7C, mitochondrial (63 aa).

The N-terminal 16 residues, 1-16, are a transit peptide targeting the mitochondrion; the sequence is MLGQSIRRFTTSVVRR. Topologically, residues 17 to 33 are mitochondrial matrix; it reads SHYEEGPGKNLPFSVEN. N6-acetyllysine; alternate is present on Lys25. The residue at position 25 (Lys25) is an N6-succinyllysine; alternate. A helical transmembrane segment spans residues 34–60; that stretch reads KWSLLAKMCLYFGSAFATPFLIVRHQL. The Mitochondrial intermembrane portion of the chain corresponds to 61-63; it reads LKT.

It belongs to the cytochrome c oxidase VIIc family. As to quaternary structure, component of the cytochrome c oxidase (complex IV, CIV), a multisubunit enzyme composed of 14 subunits. The complex is composed of a catalytic core of 3 subunits MT-CO1, MT-CO2 and MT-CO3, encoded in the mitochondrial DNA, and 11 supernumerary subunits COX4I, COX5A, COX5B, COX6A, COX6B, COX6C, COX7A, COX7B, COX7C, COX8 and NDUFA4, which are encoded in the nuclear genome. The complex exists as a monomer or a dimer and forms supercomplexes (SCs) in the inner mitochondrial membrane with NADH-ubiquinone oxidoreductase (complex I, CI) and ubiquinol-cytochrome c oxidoreductase (cytochrome b-c1 complex, complex III, CIII), resulting in different assemblies (supercomplex SCI(1)III(2)IV(1) and megacomplex MCI(2)III(2)IV(2)). Interacts with RAB5IF.

The protein localises to the mitochondrion inner membrane. Its pathway is energy metabolism; oxidative phosphorylation. Its function is as follows. Component of the cytochrome c oxidase, the last enzyme in the mitochondrial electron transport chain which drives oxidative phosphorylation. The respiratory chain contains 3 multisubunit complexes succinate dehydrogenase (complex II, CII), ubiquinol-cytochrome c oxidoreductase (cytochrome b-c1 complex, complex III, CIII) and cytochrome c oxidase (complex IV, CIV), that cooperate to transfer electrons derived from NADH and succinate to molecular oxygen, creating an electrochemical gradient over the inner membrane that drives transmembrane transport and the ATP synthase. Cytochrome c oxidase is the component of the respiratory chain that catalyzes the reduction of oxygen to water. Electrons originating from reduced cytochrome c in the intermembrane space (IMS) are transferred via the dinuclear copper A center (CU(A)) of subunit 2 and heme A of subunit 1 to the active site in subunit 1, a binuclear center (BNC) formed by heme A3 and copper B (CU(B)). The BNC reduces molecular oxygen to 2 water molecules using 4 electrons from cytochrome c in the IMS and 4 protons from the mitochondrial matrix. The polypeptide is Cytochrome c oxidase subunit 7C, mitochondrial (COX7C) (Pongo pygmaeus (Bornean orangutan)).